Reading from the N-terminus, the 383-residue chain is Protein phosphatase 2C homolog 4 (383 aa).

The 306-residue stretch at 51–356 (SLGLCTARGD…DDITCLVVRL (306 aa)) folds into the PPM-type phosphatase domain. 3 residues coordinate Mn(2+): D92, D308, and D347.

It belongs to the PP2C family. In terms of assembly, monomer. Mg(2+) is required as a cofactor. The cofactor is Mn(2+).

Its subcellular location is the vacuole membrane. The catalysed reaction is O-phospho-L-seryl-[protein] + H2O = L-seryl-[protein] + phosphate. It catalyses the reaction O-phospho-L-threonyl-[protein] + H2O = L-threonyl-[protein] + phosphate. Functionally, has a role in the regulation of vacuole fusion. This Schizosaccharomyces pombe (strain 972 / ATCC 24843) (Fission yeast) protein is Protein phosphatase 2C homolog 4 (ptc4).